The chain runs to 283 residues: ATP phosphoribosyltransferase (283 aa).

This sequence belongs to the ATP phosphoribosyltransferase family. Long subfamily. It depends on Mg(2+) as a cofactor.

The protein localises to the cytoplasm. The catalysed reaction is 1-(5-phospho-beta-D-ribosyl)-ATP + diphosphate = 5-phospho-alpha-D-ribose 1-diphosphate + ATP. It participates in amino-acid biosynthesis; L-histidine biosynthesis; L-histidine from 5-phospho-alpha-D-ribose 1-diphosphate: step 1/9. Its activity is regulated as follows. Feedback inhibited by histidine. In terms of biological role, catalyzes the condensation of ATP and 5-phosphoribose 1-diphosphate to form N'-(5'-phosphoribosyl)-ATP (PR-ATP). Has a crucial role in the pathway because the rate of histidine biosynthesis seems to be controlled primarily by regulation of HisG enzymatic activity. In Azobacteroides pseudotrichonymphae genomovar. CFP2, this protein is ATP phosphoribosyltransferase.